A 157-amino-acid polypeptide reads, in one-letter code: Putative pre-16S rRNA nuclease (157 aa).

It belongs to the YqgF nuclease family.

It is found in the cytoplasm. Could be a nuclease involved in processing of the 5'-end of pre-16S rRNA. In Orientia tsutsugamushi (strain Ikeda) (Rickettsia tsutsugamushi), this protein is Putative pre-16S rRNA nuclease.